The sequence spans 110 residues: Non-specific lipid-transfer protein 4 (110 aa).

The signal sequence occupies residues 1–17 (CVVLVMCMVVIAPMAEG). Disulfide bonds link Cys-21–Cys-68, Cys-31–Cys-45, Cys-46–Cys-91, and Cys-66–Cys-105.

This sequence belongs to the plant LTP family.

In terms of biological role, plant non-specific lipid-transfer proteins transfer phospholipids as well as galactolipids across membranes. May play a role in wax or cutin deposition in the cell walls of expanding epidermal cells and certain secretory tissues. This is Non-specific lipid-transfer protein 4 from Lens culinaris (Lentil).